The chain runs to 389 residues: Migration and invasion-inhibitory protein (389 aa).

Residues 44–54 (LDYSSSSNNLE) are compositionally biased toward low complexity. 2 disordered regions span residues 44 to 80 (LDYSSSSNNLEMPLSQETSASSVAPNSQDKRHVWDPL) and 131 to 150 (KRPVSLGGPKGLGPDKAQVP). The span at 58–70 (SQETSASSVAPNS) shows a compositional bias: polar residues. Over residues 71–80 (QDKRHVWDPL) the composition is skewed to basic and acidic residues. Position 309 is a phosphoserine (Ser309).

As to quaternary structure, interacts with IGFBP2.

Its function is as follows. Inhibits glioma cells invasion and down-regulates adhesion- and motility-associated genes such as NFKB2 and ICAM1. Exhibits opposing effects to IGFBP2 on cell invasion. The polypeptide is Migration and invasion-inhibitory protein (Miip) (Rattus norvegicus (Rat)).